The primary structure comprises 98 residues: ATP synthase subunit alpha, chloroplastic (98 aa).

It belongs to the ATPase alpha/beta chains family. F-type ATPases have 2 components, CF(1) - the catalytic core - and CF(0) - the membrane proton channel. CF(1) has five subunits: alpha(3), beta(3), gamma(1), delta(1), epsilon(1). CF(0) has four main subunits: a, b, b' and c.

It localises to the plastid. The protein localises to the chloroplast thylakoid membrane. The catalysed reaction is ATP + H2O + 4 H(+)(in) = ADP + phosphate + 5 H(+)(out). Functionally, produces ATP from ADP in the presence of a proton gradient across the membrane. The alpha chain is a regulatory subunit. In Populus euphratica (Euphrates poplar), this protein is ATP synthase subunit alpha, chloroplastic (atpA).